The sequence spans 72 residues: U10-myrmicitoxin-Tb1a (72 aa).

The first 26 residues, 1 to 26, serve as a signal peptide directing secretion; the sequence is MRVSYLSLTLTIVVVIAIIYAPETEA. Positions 27–36 are excised as a propeptide; the sequence is KAWADADAEA.

Belongs to the formicidae venom precursor-01 superfamily. In terms of tissue distribution, expressed by the venom gland.

Its subcellular location is the secreted. Functionally, in vivo, this neurotoxin paralyzes about 40% of blowflies (L.caesar) one hour after intrathoracic injection, when tested at high doses (28 nmol/g). The sequence is that of U10-myrmicitoxin-Tb1a from Tetramorium bicarinatum (Tramp ant).